Reading from the N-terminus, the 122-residue chain is Small ribosomal subunit protein uS13 (122 aa).

A disordered region spans residues 97 to 122; it reads PVRGQRTRTNARTRKGPRKTVAKKKK. The segment covering 101-122 has biased composition (basic residues); the sequence is QRTRTNARTRKGPRKTVAKKKK.

It belongs to the universal ribosomal protein uS13 family. Part of the 30S ribosomal subunit. Forms a loose heterodimer with protein S19. Forms two bridges to the 50S subunit in the 70S ribosome.

Located at the top of the head of the 30S subunit, it contacts several helices of the 16S rRNA. In the 70S ribosome it contacts the 23S rRNA (bridge B1a) and protein L5 of the 50S subunit (bridge B1b), connecting the 2 subunits; these bridges are implicated in subunit movement. Contacts the tRNAs in the A and P-sites. This chain is Small ribosomal subunit protein uS13, found in Caldanaerobacter subterraneus subsp. tengcongensis (strain DSM 15242 / JCM 11007 / NBRC 100824 / MB4) (Thermoanaerobacter tengcongensis).